The sequence spans 149 residues: 3-dehydroquinate dehydratase (149 aa).

Tyr22 serves as the catalytic Proton acceptor. The substrate site is built by Asn74, His80, and Asp87. The active-site Proton donor is the His100. Substrate contacts are provided by residues 101-102 and Arg111; that span reads MS.

It belongs to the type-II 3-dehydroquinase family. In terms of assembly, homododecamer.

It carries out the reaction 3-dehydroquinate = 3-dehydroshikimate + H2O. Its pathway is metabolic intermediate biosynthesis; chorismate biosynthesis; chorismate from D-erythrose 4-phosphate and phosphoenolpyruvate: step 3/7. Functionally, catalyzes a trans-dehydration via an enolate intermediate. The protein is 3-dehydroquinate dehydratase of Leptothrix cholodnii (strain ATCC 51168 / LMG 8142 / SP-6) (Leptothrix discophora (strain SP-6)).